Reading from the N-terminus, the 372-residue chain is Putative 26S proteasome regulatory subunit homolog MTBMA_c13930 (372 aa).

An ATP-binding site is contributed by 164–171 (GSPGTGKT).

The protein belongs to the AAA ATPase family.

Functionally, the 26S proteasome is involved in the ATP-dependent degradation of ubiquitinated proteins. The regulatory (or ATPase) complex confers ATP dependency and substrate specificity to the 26S complex. This Methanothermobacter marburgensis (strain ATCC BAA-927 / DSM 2133 / JCM 14651 / NBRC 100331 / OCM 82 / Marburg) (Methanobacterium thermoautotrophicum) protein is Putative 26S proteasome regulatory subunit homolog MTBMA_c13930.